We begin with the raw amino-acid sequence, 450 residues long: Phospho-2-dehydro-3-deoxyheptonate aldolase (450 aa).

A compositionally biased stretch (polar residues) spans 1–13; the sequence is MTVNAKTSPSAGN. A disordered region spans residues 1-20; sequence MTVNAKTSPSAGNTWRDLPA.

It belongs to the class-II DAHP synthase family. Homodimer.

The catalysed reaction is D-erythrose 4-phosphate + phosphoenolpyruvate + H2O = 7-phospho-2-dehydro-3-deoxy-D-arabino-heptonate + phosphate. The protein operates within metabolic intermediate biosynthesis; chorismate biosynthesis; chorismate from D-erythrose 4-phosphate and phosphoenolpyruvate: step 1/7. The chain is Phospho-2-dehydro-3-deoxyheptonate aldolase (aroH) from Streptomyces coelicolor (strain ATCC BAA-471 / A3(2) / M145).